A 221-amino-acid polypeptide reads, in one-letter code: Crossover junction endodeoxyribonuclease RuvC (221 aa).

Residues Asp-12, Glu-73, and Asp-146 contribute to the active site. 3 residues coordinate Mg(2+): Asp-12, Glu-73, and Asp-146. A disordered region spans residues 169-221 (SQYSEQELEKRRRVQQGKLGKAKSTYNAEQAQSHASDPAKAAHPSQFQRTDTN). Residues 192–203 (STYNAEQAQSHA) are compositionally biased toward polar residues.

This sequence belongs to the RuvC family. Homodimer which binds Holliday junction (HJ) DNA. The HJ becomes 2-fold symmetrical on binding to RuvC with unstacked arms; it has a different conformation from HJ DNA in complex with RuvA. In the full resolvosome a probable DNA-RuvA(4)-RuvB(12)-RuvC(2) complex forms which resolves the HJ. Mg(2+) serves as cofactor.

The protein localises to the cytoplasm. It carries out the reaction Endonucleolytic cleavage at a junction such as a reciprocal single-stranded crossover between two homologous DNA duplexes (Holliday junction).. Its function is as follows. The RuvA-RuvB-RuvC complex processes Holliday junction (HJ) DNA during genetic recombination and DNA repair. Endonuclease that resolves HJ intermediates. Cleaves cruciform DNA by making single-stranded nicks across the HJ at symmetrical positions within the homologous arms, yielding a 5'-phosphate and a 3'-hydroxyl group; requires a central core of homology in the junction. The consensus cleavage sequence is 5'-(A/T)TT(C/G)-3'. Cleavage occurs on the 3'-side of the TT dinucleotide at the point of strand exchange. HJ branch migration catalyzed by RuvA-RuvB allows RuvC to scan DNA until it finds its consensus sequence, where it cleaves and resolves the cruciform DNA. In Corynebacterium glutamicum (strain ATCC 13032 / DSM 20300 / JCM 1318 / BCRC 11384 / CCUG 27702 / LMG 3730 / NBRC 12168 / NCIMB 10025 / NRRL B-2784 / 534), this protein is Crossover junction endodeoxyribonuclease RuvC.